The sequence spans 1650 residues: Phosphatidylinositol 3,4,5-trisphosphate-dependent Rac exchanger 1 protein (1650 aa).

Over residues 1–19 (MEAPGSGGGDGGGDPGGDG) the composition is skewed to gly residues. The segment at 1–33 (MEAPGSGGGDGGGDPGGDGAHPDARGPVSGPCA) is disordered. The region spanning 44–235 (LRLCVLNEIL…KTVCSNINET (192 aa)) is the DH domain. The 122-residue stretch at 266-387 (ELLLQGNLLK…WLDALIRERE (122 aa)) folds into the PH domain. Serine 314 is subject to Phosphoserine. 2 DEP domains span residues 416-491 (MSKK…RFRY) and 518-592 (SLYA…RFHA). A PDZ domain is found at 620-698 (RLLIPPQEDD…SRRPLRLLVA (79 aa)). Residues 793-813 (ARASQGAPDEDPQEDDQPDSA) are disordered. Over residues 800 to 810 (PDEDPQEDDQP) the composition is skewed to acidic residues. At serine 991 the chain carries Phosphoserine. Disordered stretches follow at residues 1022 to 1047 (SPAV…GAPS) and 1099 to 1129 (PTSA…EVDR). Positions 1030–1047 (QGQGLNDSSYGSASGAPS) are enriched in polar residues. Positions 1109–1122 (PSLVEETSSSPPVS) are enriched in low complexity. Residues serine 1186 and serine 1191 each carry the phosphoserine modification.

Interacts preferentially with RAC2. Interacts with RAC1. Interacts with AUTS2.

The protein localises to the cytoplasm. The protein resides in the cytosol. Its subcellular location is the cell membrane. Functionally, functions as a RAC guanine nucleotide exchange factor (GEF), which activates the Rac proteins by exchanging bound GDP for free GTP. Its activity is synergistically activated by phosphatidylinositol 3,4,5-trisphosphate and the beta gamma subunits of heterotrimeric G protein. May function downstream of heterotrimeric G proteins in neutrophils. This chain is Phosphatidylinositol 3,4,5-trisphosphate-dependent Rac exchanger 1 protein (Prex1), found in Mus musculus (Mouse).